A 146-amino-acid polypeptide reads, in one-letter code: Large ribosomal subunit protein uL15 (146 aa).

The segment covering 1–13 (MKLHELKPAEGSR) has biased composition (basic and acidic residues). Positions 1–56 (MKLHELKPAEGSRKVRNRVGRGAATGNGKTSGRGQKGQKARSGGSVRPGFEGGQLP) are disordered. Gly residues predominate over residues 23-35 (AATGNGKTSGRGQ).

This sequence belongs to the universal ribosomal protein uL15 family. In terms of assembly, part of the 50S ribosomal subunit.

Its function is as follows. Binds to the 23S rRNA. The sequence is that of Large ribosomal subunit protein uL15 from Staphylococcus saprophyticus subsp. saprophyticus (strain ATCC 15305 / DSM 20229 / NCIMB 8711 / NCTC 7292 / S-41).